A 307-amino-acid polypeptide reads, in one-letter code: Zinc transporter ZIP9 (307 aa).

Residues 4–24 form a helical membrane-spanning segment; sequence FISISLLSLAMLVGCYVAGII. Asparagine 29 carries an N-linked (GlcNAc...) asparagine glycan. 5 helical membrane-spanning segments follow: residues 35–55, 106–126, 146–166, 176–196, and 210–230; these read LKLV…AVIV, AYIG…DQIG, ITTT…LGAA, LIVF…LVSF, and HLLV…LGLS. Residue asparagine 241 is glycosylated (N-linked (GlcNAc...) asparagine). Transmembrane regions (helical) follow at residues 244–264 and 286–306; these read GVAM…HVLP and LEVA…VGHQ.

This sequence belongs to the ZIP transporter (TC 2.A.5) family. In terms of tissue distribution, highly expressed in pancreas, testis, and pituitary and moderately in the kidney, liver, uterus, heart, prostate, and brain, whereas expression is lower in the ovary and colon.

Its subcellular location is the golgi apparatus. It localises to the trans-Golgi network membrane. The protein resides in the cell membrane. It is found in the cytoplasm. The protein localises to the perinuclear region. Its subcellular location is the mitochondrion. It localises to the nucleus. It catalyses the reaction Zn(2+)(in) = Zn(2+)(out). In terms of biological role, transports zinc ions across cell and organelle membranes into the cytoplasm and regulates intracellular zinc homeostasis. Participates in the zinc ions efflux out of the secretory compartments. Regulates intracellular zinc level, resulting in the enhancement of AKT1 and MAPK3/MAPK1 (Erk1/2) phosphorylation in response to the BCR activation. Also functions as a membrane androgen receptor that mediates, through a G protein, the non-classical androgen signaling pathway, characterized by the activation of MAPK3/MAPK1 (Erk1/2) and transcription factors CREB1 or ATF1. This pathway contributes to CLDN1 and CLDN5 expression and tight junction formation between adjacent Sertoli cells. Mediates androgen-induced vascular endothelial cell proliferation through activation of an inhibitory G protein leading to the AKT1 and MAPK3/MAPK1 (Erk1/2) activation which in turn modulate inhibition (phosphorylation) of GSK3B and CCND1 transcription. Moreover, has dual functions as a membrane-bound androgen receptor and as an androgen-dependent zinc transporter both of which are mediated through an inhibitory G protein (Gi) that mediates both MAP kinase and zinc signaling leading to the androgen-dependent apoptotic process. The sequence is that of Zinc transporter ZIP9 from Homo sapiens (Human).